Consider the following 259-residue polypeptide: Haloacid dehalogenase-like hydrolase domain-containing protein 2 (259 aa).

2 residues coordinate Mg(2+): Asp13 and Ser15. Substrate is bound by residues 13–15 and 46–47; these read DLS and TN. Residues 47 to 71 are a coiled coil; the sequence is NTTKESKQDLLERLRKLEFDISEDE. The residue at position 50 (Lys50) is an N6-succinyllysine. A substrate-binding site is contributed by Lys179. Residue Asp204 coordinates Mg(2+).

It belongs to the HAD-like hydrolase superfamily. Requires Mg(2+) as cofactor.

The polypeptide is Haloacid dehalogenase-like hydrolase domain-containing protein 2 (HDHD2) (Pongo abelii (Sumatran orangutan)).